A 780-amino-acid polypeptide reads, in one-letter code: Putative ABC transporter ATP-binding protein BL0043 (780 aa).

2 consecutive ABC transporter domains span residues leucine 2–threonine 238 and isoleucine 282–histidine 531. Glycine 34–serine 41 contributes to the ATP binding site. A disordered region spans residues alanine 230 to aspartate 272. Glycine 316–serine 323 provides a ligand contact to ATP. Helical transmembrane passes span phenylalanine 551–isoleucine 573, serine 586–glycine 608, glycine 623–leucine 645, and isoleucine 759–isoleucine 778.

Belongs to the ABC transporter superfamily.

Its subcellular location is the cell membrane. Probably part of an ABC transporter complex. Responsible for energy coupling to the transport system. This Bifidobacterium longum (strain NCC 2705) protein is Putative ABC transporter ATP-binding protein BL0043.